The chain runs to 360 residues: DNA replication and repair protein RecF (360 aa).

ATP is bound at residue 30–37 (GDNAQGKT).

This sequence belongs to the RecF family.

It is found in the cytoplasm. In terms of biological role, the RecF protein is involved in DNA metabolism; it is required for DNA replication and normal SOS inducibility. RecF binds preferentially to single-stranded, linear DNA. It also seems to bind ATP. The polypeptide is DNA replication and repair protein RecF (Lachnoclostridium phytofermentans (strain ATCC 700394 / DSM 18823 / ISDg) (Clostridium phytofermentans)).